A 92-amino-acid polypeptide reads, in one-letter code: Small ribosomal subunit protein bS18 (92 aa).

It belongs to the bacterial ribosomal protein bS18 family. Part of the 30S ribosomal subunit. Forms a tight heterodimer with protein bS6.

Binds as a heterodimer with protein bS6 to the central domain of the 16S rRNA, where it helps stabilize the platform of the 30S subunit. This Ralstonia nicotianae (strain ATCC BAA-1114 / GMI1000) (Ralstonia solanacearum) protein is Small ribosomal subunit protein bS18.